Reading from the N-terminus, the 376-residue chain is Ribonucleoside-diphosphate reductase subunit beta (376 aa).

Positions 85, 116, and 119 each coordinate Fe cation. Tyr123 is an active-site residue. Positions 205, 239, and 242 each coordinate Fe cation.

It belongs to the ribonucleoside diphosphate reductase small chain family. As to quaternary structure, tetramer of two alpha and two beta subunits. The cofactor is Fe cation.

It carries out the reaction a 2'-deoxyribonucleoside 5'-diphosphate + [thioredoxin]-disulfide + H2O = a ribonucleoside 5'-diphosphate + [thioredoxin]-dithiol. Provides the precursors necessary for DNA synthesis. Catalyzes the biosynthesis of deoxyribonucleotides from the corresponding ribonucleotides. This Buchnera aphidicola subsp. Baizongia pistaciae (strain Bp) protein is Ribonucleoside-diphosphate reductase subunit beta (nrdB).